Here is a 470-residue protein sequence, read N- to C-terminus: Sorting nexin-17 (470 aa).

In terms of domain architecture, PX spans 1–109 (MHFSIPETES…SFLRRAQQET (109 aa)). Arg36, Ser38, Lys62, and Arg75 together coordinate a 1,2-diacyl-sn-glycero-3-phospho-(1D-myo-inositol-3-phosphate). A Ras-associating domain is found at 115 to 206 (EEVSLEVLLS…YKIVLRKSYW (92 aa)). The segment at 115-432 (EEVSLEVLLS…DASRESMVKL (318 aa)) is FERM-like. The segment at 270–432 (GYLRFDACVA…DASRESMVKL (163 aa)) is PTB-like F3 module. A phosphoserine mark is found at Ser336, Ser407, Ser409, Ser415, Ser421, Ser437, and Ser440. Residues 400-426 (VGGTLRRSDSQQAVKSPPLLESPDASR) form a disordered region.

This sequence belongs to the sorting nexin family. Monomer. Interacts with APP (via cytoplasmic YXNPXY motif). Interacts with KIF1B. Interacts with the C-termini of P-selectin, PTC, LDLR, VLDLR, LRP1 and LRP8. Interacts with KRIT1 (via N-terminus). Interacts with HRAS. Interacts with ITGB1 and ITGB5 (via NPxY motif). Interacts with CCDC22 and CCDC93; the interaction associates SNX17 with the CCC complex. Interacts (via C-terminus) with VPS26C and VPS35L; the interactions are direct and associate SNX17 with the retriever complex.

It localises to the cytoplasm. The protein resides in the early endosome. Its subcellular location is the cytoplasmic vesicle membrane. Its function is as follows. Critical regulator of endosomal recycling of numerous surface proteins, including integrins, signaling receptor and channels. Binds to NPxY sequences in the cytoplasmic tails of target cargos. Associates with retriever and CCC complexes to prevent lysosomal degradation and promote cell surface recycling of numerous cargos such as integrins ITGB1, ITGB5 and their associated alpha subunits. Also required for maintenance of normal cell surface levels of APP and LRP1. Interacts with membranes containing phosphatidylinositol 3-phosphate (PtdIns(3P)). This is Sorting nexin-17 (SNX17) from Bos taurus (Bovine).